The primary structure comprises 464 residues: Siroheme synthase (464 aa).

The tract at residues methionine 1 to leucine 203 is precorrin-2 dehydrogenase /sirohydrochlorin ferrochelatase. Residues glutamate 22–isoleucine 23 and proline 43–glutamate 44 contribute to the NAD(+) site. At serine 128 the chain carries Phosphoserine. A uroporphyrinogen-III C-methyltransferase region spans residues glycine 216–valine 464. An S-adenosyl-L-methionine-binding site is contributed by proline 225. Catalysis depends on aspartate 248, which acts as the Proton acceptor. Lysine 270 acts as the Proton donor in catalysis. Residues glycine 301–aspartate 303, isoleucine 306, threonine 331–alanine 332, methionine 383, and glycine 412 contribute to the S-adenosyl-L-methionine site.

In the N-terminal section; belongs to the precorrin-2 dehydrogenase / sirohydrochlorin ferrochelatase family. It in the C-terminal section; belongs to the precorrin methyltransferase family.

It carries out the reaction uroporphyrinogen III + 2 S-adenosyl-L-methionine = precorrin-2 + 2 S-adenosyl-L-homocysteine + H(+). The catalysed reaction is precorrin-2 + NAD(+) = sirohydrochlorin + NADH + 2 H(+). The enzyme catalyses siroheme + 2 H(+) = sirohydrochlorin + Fe(2+). It participates in cofactor biosynthesis; adenosylcobalamin biosynthesis; precorrin-2 from uroporphyrinogen III: step 1/1. It functions in the pathway cofactor biosynthesis; adenosylcobalamin biosynthesis; sirohydrochlorin from precorrin-2: step 1/1. The protein operates within porphyrin-containing compound metabolism; siroheme biosynthesis; precorrin-2 from uroporphyrinogen III: step 1/1. Its pathway is porphyrin-containing compound metabolism; siroheme biosynthesis; siroheme from sirohydrochlorin: step 1/1. It participates in porphyrin-containing compound metabolism; siroheme biosynthesis; sirohydrochlorin from precorrin-2: step 1/1. Multifunctional enzyme that catalyzes the SAM-dependent methylations of uroporphyrinogen III at position C-2 and C-7 to form precorrin-2 via precorrin-1. Then it catalyzes the NAD-dependent ring dehydrogenation of precorrin-2 to yield sirohydrochlorin. Finally, it catalyzes the ferrochelation of sirohydrochlorin to yield siroheme. This is Siroheme synthase from Pseudomonas savastanoi pv. phaseolicola (strain 1448A / Race 6) (Pseudomonas syringae pv. phaseolicola (strain 1448A / Race 6)).